The sequence spans 440 residues: Histidinol dehydrogenase (440 aa).

3 residues coordinate NAD(+): Tyr133, Gln194, and Asn217. Substrate contacts are provided by Ser240, Gln262, and His265. Residues Gln262 and His265 each coordinate Zn(2+). Residues Glu330 and His331 each act as proton acceptor in the active site. Residues His331, Asp364, Glu418, and His423 each contribute to the substrate site. A Zn(2+)-binding site is contributed by Asp364. His423 serves as a coordination point for Zn(2+).

The protein belongs to the histidinol dehydrogenase family. It depends on Zn(2+) as a cofactor.

The enzyme catalyses L-histidinol + 2 NAD(+) + H2O = L-histidine + 2 NADH + 3 H(+). It participates in amino-acid biosynthesis; L-histidine biosynthesis; L-histidine from 5-phospho-alpha-D-ribose 1-diphosphate: step 9/9. In terms of biological role, catalyzes the sequential NAD-dependent oxidations of L-histidinol to L-histidinaldehyde and then to L-histidine. The chain is Histidinol dehydrogenase from Nitrosospira multiformis (strain ATCC 25196 / NCIMB 11849 / C 71).